The following is a 359-amino-acid chain: MNIYEQLQAVEDRYEELGELLSDPDVVSDTKRFMELSKEEASTRDTVTAYREYKQVLQNIVDAEEMIKESGGDADLEEMAKQELKDAKAEKEEYEEKLKILLLPKDPNDDKNIILEIRGAAGGDEAQLFAGDLLQMYQKYAESQGWRFEVMEASYNGVGGIKEVVAMVSGQSVYSKLKYESGAHRVQRVPVTESQGRVHTSTATVLVMPEIEEVEYDIDPKDLRVDIYHASGAGGQNVNKVATAVRIVHLPTNIKVEMQEERTQQKNRDKAMKIIRARVADHFAQIAQDEQDAERKSTIGTGDRSERIRTYNFPQNRVTDHRIGLTLQKLDTILAGKLDEVVDALVLYDQTQKLEELNK.

Gln-236 is subject to N5-methylglutamine. The interval 288-307 (QDEQDAERKSTIGTGDRSER) is disordered. Positions 293–307 (AERKSTIGTGDRSER) are enriched in basic and acidic residues.

Belongs to the prokaryotic/mitochondrial release factor family. Methylated by PrmC. Methylation increases the termination efficiency of RF1.

Its subcellular location is the cytoplasm. In terms of biological role, peptide chain release factor 1 directs the termination of translation in response to the peptide chain termination codons UAG and UAA. In Streptococcus gordonii (strain Challis / ATCC 35105 / BCRC 15272 / CH1 / DL1 / V288), this protein is Peptide chain release factor 1 (prfA).